Here is a 690-residue protein sequence, read N- to C-terminus: Kelch-like protein 8 (690 aa).

The region spanning 111–178 (CDVELLVAGS…IYTDKIAITM (68 aa)) is the BTB domain. In terms of domain architecture, BACK spans 213–314 (CMSLYHFSDI…VGWNFLCEAV (102 aa)). 6 Kelch repeats span residues 383 to 430 (AIFC…SANG), 431 to 477 (NLYA…SIEN), 478 to 524 (VIYA…VIGR), 525 to 571 (YLFA…VLDG), 572 to 618 (YLYA…ALGG), and 620 to 665 (VYAI…WANV).

As to quaternary structure, component of the BCR(kel-8) E3 ubiquitin ligase complex, at least composed of cul-3, kel-8 and rbx-1. Interacts with rpy-1. Expressed in neurons.

The protein localises to the synapse. It functions in the pathway protein modification; protein ubiquitination. Functionally, substrate-specific adapter of a BCR (BTB-CUL3-RBX1) E3 ubiquitin ligase complex that regulates degradation of glutamate receptors in neurons. The BCR(kel-8) ubiquitin ligase complex mediates ubiquitination and subsequent degradation of rpy-1. Indirectly regulates the protein turnover of glr-1, possibly via ubiquitination and degradation of rpy-1. The protein is Kelch-like protein 8 (kel-8) of Caenorhabditis elegans.